Consider the following 578-residue polypeptide: Proline--tRNA ligase (578 aa).

This sequence belongs to the class-II aminoacyl-tRNA synthetase family. ProS type 1 subfamily. As to quaternary structure, homodimer.

The protein resides in the cytoplasm. It catalyses the reaction tRNA(Pro) + L-proline + ATP = L-prolyl-tRNA(Pro) + AMP + diphosphate. Functionally, catalyzes the attachment of proline to tRNA(Pro) in a two-step reaction: proline is first activated by ATP to form Pro-AMP and then transferred to the acceptor end of tRNA(Pro). As ProRS can inadvertently accommodate and process non-cognate amino acids such as alanine and cysteine, to avoid such errors it has two additional distinct editing activities against alanine. One activity is designated as 'pretransfer' editing and involves the tRNA(Pro)-independent hydrolysis of activated Ala-AMP. The other activity is designated 'posttransfer' editing and involves deacylation of mischarged Ala-tRNA(Pro). The misacylated Cys-tRNA(Pro) is not edited by ProRS. This Paraburkholderia phymatum (strain DSM 17167 / CIP 108236 / LMG 21445 / STM815) (Burkholderia phymatum) protein is Proline--tRNA ligase.